The primary structure comprises 1073 residues: Error-prone DNA polymerase (1073 aa).

Positions 41 to 73 (EAEPECLSTPRPGPGSTEVPGERRGSRQGERSG) are disordered. Over residues 60–73 (PGERRGSRQGERSG) the composition is skewed to basic and acidic residues.

The protein belongs to the DNA polymerase type-C family. DnaE2 subfamily.

The protein localises to the cytoplasm. It catalyses the reaction DNA(n) + a 2'-deoxyribonucleoside 5'-triphosphate = DNA(n+1) + diphosphate. Its function is as follows. DNA polymerase involved in damage-induced mutagenesis and translesion synthesis (TLS). It is not the major replicative DNA polymerase. This is Error-prone DNA polymerase from Corynebacterium efficiens (strain DSM 44549 / YS-314 / AJ 12310 / JCM 11189 / NBRC 100395).